The sequence spans 96 residues: MIDREQVRKVALLARLELTPQEEEQFTTQLGSILDYVEQLNELDVSNVPPTARAIDVSNITREDNLQPYADREAILSSAPEQEGEFFKVPKILNAE.

It belongs to the GatC family. In terms of assembly, heterotrimer of A, B and C subunits.

It carries out the reaction L-glutamyl-tRNA(Gln) + L-glutamine + ATP + H2O = L-glutaminyl-tRNA(Gln) + L-glutamate + ADP + phosphate + H(+). The catalysed reaction is L-aspartyl-tRNA(Asn) + L-glutamine + ATP + H2O = L-asparaginyl-tRNA(Asn) + L-glutamate + ADP + phosphate + 2 H(+). In terms of biological role, allows the formation of correctly charged Asn-tRNA(Asn) or Gln-tRNA(Gln) through the transamidation of misacylated Asp-tRNA(Asn) or Glu-tRNA(Gln) in organisms which lack either or both of asparaginyl-tRNA or glutaminyl-tRNA synthetases. The reaction takes place in the presence of glutamine and ATP through an activated phospho-Asp-tRNA(Asn) or phospho-Glu-tRNA(Gln). This is Aspartyl/glutamyl-tRNA(Asn/Gln) amidotransferase subunit C from Trichormus variabilis (strain ATCC 29413 / PCC 7937) (Anabaena variabilis).